A 367-amino-acid chain; its full sequence is Riboflavin biosynthesis protein RibD (367 aa).

The CMP/dCMP-type deaminase domain maps to 1-123; sequence MQDEYYMARA…RLQQAGIDVS (123 aa). The tract at residues 1–145 is deaminase; sequence MQDEYYMARA…KGFLKRMRTG (145 aa). Residue His50 coordinates Zn(2+). Residue Glu52 is the Proton donor of the active site. Zn(2+) is bound by residues Cys75 and Cys84. The reductase stretch occupies residues 146 to 367; the sequence is FPYIQLKLGA…PDVCLHLVGA (222 aa). 161–164 serves as a coordination point for NADP(+); the sequence is TAMA. Ser168 contributes to the substrate binding site. Trp170 provides a ligand contact to NADP(+). Residue Arg184 participates in substrate binding. The NADP(+) site is built by Thr196 and Asp200. Positions 204 and 207 each coordinate substrate. Ser234 is an NADP(+) binding site. Residue Glu299 coordinates substrate. 301–304 contributes to the NADP(+) binding site; the sequence is GPTL.

In the N-terminal section; belongs to the cytidine and deoxycytidylate deaminase family. This sequence in the C-terminal section; belongs to the HTP reductase family. In terms of assembly, homodimer. The cofactor is Zn(2+).

It carries out the reaction 2,5-diamino-6-hydroxy-4-(5-phosphoribosylamino)-pyrimidine + H2O + H(+) = 5-amino-6-(5-phospho-D-ribosylamino)uracil + NH4(+). The catalysed reaction is 5-amino-6-(5-phospho-D-ribitylamino)uracil + NADP(+) = 5-amino-6-(5-phospho-D-ribosylamino)uracil + NADPH + H(+). It participates in cofactor biosynthesis; riboflavin biosynthesis; 5-amino-6-(D-ribitylamino)uracil from GTP: step 2/4. The protein operates within cofactor biosynthesis; riboflavin biosynthesis; 5-amino-6-(D-ribitylamino)uracil from GTP: step 3/4. Functionally, converts 2,5-diamino-6-(ribosylamino)-4(3h)-pyrimidinone 5'-phosphate into 5-amino-6-(ribosylamino)-2,4(1h,3h)-pyrimidinedione 5'-phosphate. This is Riboflavin biosynthesis protein RibD (ribD) from Escherichia coli (strain K12).